The following is a 110-amino-acid chain: Large ribosomal subunit protein uL22 (110 aa).

The protein belongs to the universal ribosomal protein uL22 family. In terms of assembly, part of the 50S ribosomal subunit.

Its function is as follows. This protein binds specifically to 23S rRNA; its binding is stimulated by other ribosomal proteins, e.g. L4, L17, and L20. It is important during the early stages of 50S assembly. It makes multiple contacts with different domains of the 23S rRNA in the assembled 50S subunit and ribosome. Functionally, the globular domain of the protein is located near the polypeptide exit tunnel on the outside of the subunit, while an extended beta-hairpin is found that lines the wall of the exit tunnel in the center of the 70S ribosome. This chain is Large ribosomal subunit protein uL22, found in Syntrophotalea carbinolica (strain DSM 2380 / NBRC 103641 / GraBd1) (Pelobacter carbinolicus).